The sequence spans 291 residues: Acetyl-coenzyme A carboxylase carboxyl transferase subunit beta (291 aa).

In terms of domain architecture, CoA carboxyltransferase N-terminal spans 29–291 (LWSKCPECGE…MHQQPAAVSA (263 aa)). 4 residues coordinate Zn(2+): Cys33, Cys36, Cys52, and Cys55. The C4-type zinc-finger motif lies at 33–55 (CPECGEVVYRKDLIANASVCASC).

The protein belongs to the AccD/PCCB family. As to quaternary structure, acetyl-CoA carboxylase is a heterohexamer composed of biotin carboxyl carrier protein (AccB), biotin carboxylase (AccC) and two subunits each of ACCase subunit alpha (AccA) and ACCase subunit beta (AccD). It depends on Zn(2+) as a cofactor.

Its subcellular location is the cytoplasm. The enzyme catalyses N(6)-carboxybiotinyl-L-lysyl-[protein] + acetyl-CoA = N(6)-biotinyl-L-lysyl-[protein] + malonyl-CoA. It functions in the pathway lipid metabolism; malonyl-CoA biosynthesis; malonyl-CoA from acetyl-CoA: step 1/1. Functionally, component of the acetyl coenzyme A carboxylase (ACC) complex. Biotin carboxylase (BC) catalyzes the carboxylation of biotin on its carrier protein (BCCP) and then the CO(2) group is transferred by the transcarboxylase to acetyl-CoA to form malonyl-CoA. In Synechococcus sp. (strain RCC307), this protein is Acetyl-coenzyme A carboxylase carboxyl transferase subunit beta.